The chain runs to 581 residues: Protein LYRIC (581 aa).

Topologically, residues 1-49 (MAARSWQDELAQQAEEGSARLRELLSVGLGFLRTELGLDLGLEPKRYPS) are lumenal. The activation of NF-kappa-B stretch occupies residues 1–71 (MAARSWQDEL…LLLFLLGYGW (71 aa)). The chain crosses the membrane as a helical span at residues 50 to 70 (WVILVGTGALGLLLLFLLGYG). Residues 71–581 (WAAACAGARK…KKKKKARRET (511 aa)) lie on the Cytoplasmic side of the membrane. The interval 72 to 168 (AAACAGARKK…EKSKKNKKKS (97 aa)) is interaction with BCCIP. The disordered stretch occupies residues 77–221 (GARKKRRSPP…DSGSLDSTIP (145 aa)). The interaction with RELA stretch occupies residues 100-204 (EDPAQLKNLR…ISHREKRQQR (105 aa)). Basic and acidic residues predominate over residues 108-126 (LRSEEQKKKNRKKLPEKPK). Thr142 carries the phosphothreonine modification. A compositionally biased stretch (basic residues) spans 159 to 168 (EKSKKNKKKS). Phosphoserine is present on Ser179. The span at 197–207 (HREKRQQRKRD) shows a compositional bias: basic residues. Phosphoserine occurs at positions 215 and 250. At Lys263 the chain carries N6-acetyllysine. A disordered region spans residues 280-581 (VNGGGWSEKS…KKKKKARRET (302 aa)). 3 positions are modified to phosphoserine: Ser297, Ser305, and Ser310. The span at 318–331 (QSAWTQDPGDTNAN) shows a compositional bias: polar residues. Phosphoserine occurs at positions 343 and 368. Polar residues-rich tracts occupy residues 353-371 (EPVS…SRNQ) and 382-393 (NGLSSADPSSDW). Residues 380-442 (GLNGLSSADP…EGALPTGKSK (63 aa)) form a lung-homing for mammary tumors region. Residues Ser414 and Ser425 each carry the phosphoserine modification. Over residues 421–433 (DQKDSDDDKEKGE) the composition is skewed to basic and acidic residues. The segment covering 440 to 450 (KSKKKKKKKKK) has biased composition (basic residues). Residues Ser456, Ser477, Ser493, and Ser495 each carry the phosphoserine modification. Polar residues-rich tracts occupy residues 519–535 (PSVT…SSQV) and 548–567 (NAKQ…NWES). A Phosphoserine modification is found at Ser567. Over residues 570-581 (QIKKKKKARRET) the composition is skewed to basic residues.

As to quaternary structure, interacts with BCCIP, CREBBP/CBP and RELA/p65. In terms of tissue distribution, widely expressed, with highest levels in liver, kidney, prostate and small intestine. Not detected in endothelial cells.

The protein resides in the endoplasmic reticulum membrane. The protein localises to the nucleus membrane. Its subcellular location is the cell junction. It is found in the tight junction. It localises to the nucleus. The protein resides in the nucleolus. The protein localises to the cytoplasm. Its subcellular location is the perinuclear region. Down-regulates SLC1A2/EAAT2 promoter activity when expressed ectopically. Activates the nuclear factor kappa-B (NF-kappa-B) transcription factor. Promotes anchorage-independent growth of immortalized melanocytes and astrocytes which is a key component in tumor cell expansion. Promotes lung metastasis and also has an effect on bone and brain metastasis, possibly by enhancing the seeding of tumor cells to the target organ endothelium. Induces chemoresistance. This Rattus norvegicus (Rat) protein is Protein LYRIC (Mtdh).